The primary structure comprises 370 residues: Formate dehydrogenase (370 aa).

2 residues coordinate substrate: Ile94 and Asn120. Residues Arg175–Ile176, Asp196, Pro231–Ser235, Thr257, Asp283, and His312–Gly315 each bind NAD(+).

It belongs to the D-isomer specific 2-hydroxyacid dehydrogenase family. FDH subfamily. As to quaternary structure, homodimer.

It localises to the cytoplasm. It carries out the reaction formate + NAD(+) = CO2 + NADH. Catalyzes the NAD(+)-dependent oxidation of formate to carbon dioxide. Formate oxidation is the final step in the methanol oxidation pathway in methylotrophic microorganisms. Has a role in the detoxification of exogenous formate in non-methylotrophic organisms. The protein is Formate dehydrogenase of Chaetomium thermophilum (strain DSM 1495 / CBS 144.50 / IMI 039719) (Thermochaetoides thermophila).